Reading from the N-terminus, the 261-residue chain is Tryptophan synthase alpha chain (261 aa).

Active-site proton acceptor residues include Glu-47 and Asp-58.

The protein belongs to the TrpA family. As to quaternary structure, tetramer of two alpha and two beta chains.

It catalyses the reaction (1S,2R)-1-C-(indol-3-yl)glycerol 3-phosphate + L-serine = D-glyceraldehyde 3-phosphate + L-tryptophan + H2O. It participates in amino-acid biosynthesis; L-tryptophan biosynthesis; L-tryptophan from chorismate: step 5/5. In terms of biological role, the alpha subunit is responsible for the aldol cleavage of indoleglycerol phosphate to indole and glyceraldehyde 3-phosphate. In Neisseria gonorrhoeae (strain ATCC 700825 / FA 1090), this protein is Tryptophan synthase alpha chain.